The chain runs to 167 residues: Ammonium/H(+) antiporter subunit AmhM (167 aa).

The RCK C-terminal domain occupies 79 to 163; sequence IDRIKLIRKQ…IQKFEELCAC (85 aa).

As to quaternary structure, interacts with AmhT.

It localises to the cell membrane. Its function is as follows. Modulates the activity of the ammonium/proton antiporter AmhT. This is Ammonium/H(+) antiporter subunit AmhM (amhM) from Alkalihalophilus pseudofirmus (strain ATCC BAA-2126 / JCM 17055 / OF4) (Bacillus pseudofirmus).